Here is a 216-residue protein sequence, read N- to C-terminus: Pyrophosphatase PpaX (216 aa).

D9 serves as the catalytic Nucleophile.

The protein belongs to the HAD-like hydrolase superfamily. PpaX family. Mg(2+) is required as a cofactor.

It catalyses the reaction diphosphate + H2O = 2 phosphate + H(+). In terms of biological role, hydrolyzes pyrophosphate formed during P-Ser-HPr dephosphorylation by HPrK/P. Might play a role in controlling the intracellular pyrophosphate pool. In Bacillus cereus (strain ATCC 10987 / NRS 248), this protein is Pyrophosphatase PpaX.